A 149-amino-acid polypeptide reads, in one-letter code: MKYSRHAKILEIIDTMEIETQEELSEELRKIGFNVTQATVSRDIKELRLIKVLSKSGNYKYATLRSQENVLSDRLVRLFKDSILSIEYAGNIMVMKTLAGAAQAAASAIDAVDLKGVMGTIAGDDTIFVVVRDQDQMQEIEEKFRRLTK.

This sequence belongs to the ArgR family.

It is found in the cytoplasm. It functions in the pathway amino-acid biosynthesis; L-arginine biosynthesis [regulation]. Its function is as follows. Regulates arginine biosynthesis genes. This chain is Arginine repressor, found in Alkaliphilus metalliredigens (strain QYMF).